A 71-amino-acid chain; its full sequence is Protein SlyX homolog (71 aa).

It belongs to the SlyX family.

In Thioalkalivibrio sulfidiphilus (strain HL-EbGR7), this protein is Protein SlyX homolog.